Reading from the N-terminus, the 914-residue chain is Eukaryotic translation initiation factor 3 subunit C-like protein (914 aa).

Positions 1-44 are disordered; that stretch reads MSRFFTTGSDSESESSLSGEELVTKPVGGNYGKQPLLLSEDEED. The span at 8 to 21 shows a compositional bias: low complexity; that stretch reads GSDSESESSLSGEE. A phosphoserine mark is found at serine 9, serine 11, serine 13, serine 15, serine 16, serine 18, and serine 39. Lysine 99 bears the N6-acetyllysine mark. Disordered regions lie at residues 157-302 and 523-543; these read TSYK…GGEW and QLTP…NEGE. A phosphoserine mark is found at serine 166, serine 178, serine 181, and serine 182. Acidic residues predominate over residues 166–190; sequence SADEDAEKNEEDSEGSSDEDEDEDG. Over residues 199–216 the composition is skewed to basic and acidic residues; that stretch reads KKSEAPSGESRKFLKKMD. Acidic residues predominate over residues 217 to 232; it reads DEDEDSEDSEDDEDWD. Over residues 261 to 278 the composition is skewed to basic and acidic residues; sequence PTTDEDKKAAEKKREDKA. A compositionally biased stretch (acidic residues) spans 291–300; sequence EEEEEDNEGG. Residues 523 to 532 are compositionally biased toward polar residues; the sequence is QLTPPEGSSK. A Phosphothreonine modification is found at threonine 525. Lysine 644 carries the N6-acetyllysine modification. One can recognise a PCI domain in the interval 674–850; that stretch reads FHLHINLELL…QTVVMHRTEP (177 aa). Positions 886–914 are disordered; sequence FRDQKDGYRKNEGYMRRGGYRQQQSQTAY. Basic and acidic residues predominate over residues 887 to 900; it reads RDQKDGYRKNEGYM. Residue serine 910 is modified to Phosphoserine.

The protein belongs to the eIF-3 subunit C family. Component of the eukaryotic translation initiation factor 3 (eIF-3) complex, which is composed of 13 subunits: EIF3A, EIF3B, EIF3C, EIF3D, EIF3E, EIF3F, EIF3G, EIF3H, EIF3I, EIF3J, EIF3K, EIF3L and EIF3M. The eIF-3 complex appears to include 3 stable modules: module A is composed of EIF3A, EIF3B, EIF3G and EIF3I; module B is composed of EIF3F, EIF3H, and EIF3M; and module C is composed of EIF3C, EIF3D, EIF3E, EIF3K and EIF3L. EIF3C of module C binds EIF3B of module A and EIF3H of module B, thereby linking the three modules. EIF3J is a labile subunit that binds to the eIF-3 complex via EIF3B. The eIF-3 complex interacts with RPS6KB1 under conditions of nutrient depletion. Mitogenic stimulation leads to binding and activation of a complex composed of MTOR and RPTOR, leading to phosphorylation and release of RPS6KB1 and binding of EIF4B to eIF-3. Phosphorylated. Phosphorylation is enhanced upon serum stimulation.

It is found in the cytoplasm. Component of the eukaryotic translation initiation factor 3 (eIF-3) complex, which is required for several steps in the initiation of protein synthesis. The eIF-3 complex associates with the 40S ribosome and facilitates the recruitment of eIF-1, eIF-1A, eIF-2:GTP:methionyl-tRNAi and eIF-5 to form the 43S pre-initiation complex (43S PIC). The eIF-3 complex stimulates mRNA recruitment to the 43S PIC and scanning of the mRNA for AUG recognition. The eIF-3 complex is also required for disassembly and recycling of post-termination ribosomal complexes and subsequently prevents premature joining of the 40S and 60S ribosomal subunits prior to initiation. The eIF-3 complex specifically targets and initiates translation of a subset of mRNAs involved in cell proliferation, including cell cycling, differentiation and apoptosis, and uses different modes of RNA stem-loop binding to exert either translational activation or repression. The chain is Eukaryotic translation initiation factor 3 subunit C-like protein (EIF3CL) from Homo sapiens (Human).